The sequence spans 460 residues: Cysteine--tRNA ligase (460 aa).

Residue Cys28 coordinates Zn(2+). A 'HIGH' region motif is present at residues 30–40; it reads MTVYDYCHLGH. Zn(2+)-binding residues include Cys209, His234, and Glu238. Positions 266–270 match the 'KMSKS' region motif; the sequence is KMSKS. ATP is bound at residue Lys269.

This sequence belongs to the class-I aminoacyl-tRNA synthetase family. In terms of assembly, monomer. It depends on Zn(2+) as a cofactor.

It localises to the cytoplasm. It carries out the reaction tRNA(Cys) + L-cysteine + ATP = L-cysteinyl-tRNA(Cys) + AMP + diphosphate. This chain is Cysteine--tRNA ligase, found in Pseudomonas fluorescens (strain Pf0-1).